Here is a 256-residue protein sequence, read N- to C-terminus: Hydroxyacylglutathione hydrolase (256 aa).

Residues H53, H55, D57, H58, H113, D130, and H168 each coordinate Zn(2+).

The protein belongs to the metallo-beta-lactamase superfamily. Glyoxalase II family. As to quaternary structure, monomer. Requires Zn(2+) as cofactor.

The enzyme catalyses an S-(2-hydroxyacyl)glutathione + H2O = a 2-hydroxy carboxylate + glutathione + H(+). Its pathway is secondary metabolite metabolism; methylglyoxal degradation; (R)-lactate from methylglyoxal: step 2/2. Functionally, thiolesterase that catalyzes the hydrolysis of S-D-lactoyl-glutathione to form glutathione and D-lactic acid. In Tolumonas auensis (strain DSM 9187 / NBRC 110442 / TA 4), this protein is Hydroxyacylglutathione hydrolase.